The primary structure comprises 128 residues: Sulfurtransferase TusD (128 aa).

The Cysteine persulfide intermediate role is filled by Cys78.

Belongs to the DsrE/TusD family. As to quaternary structure, heterohexamer, formed by a dimer of trimers. The hexameric TusBCD complex contains 2 copies each of TusB, TusC and TusD. The TusBCD complex interacts with TusE.

It is found in the cytoplasm. Part of a sulfur-relay system required for 2-thiolation of 5-methylaminomethyl-2-thiouridine (mnm(5)s(2)U) at tRNA wobble positions. Accepts sulfur from TusA and transfers it in turn to TusE. This Cronobacter sakazakii (strain ATCC BAA-894) (Enterobacter sakazakii) protein is Sulfurtransferase TusD.